Consider the following 984-residue polypeptide: Ephrin type-A receptor 3 (984 aa).

Residues 1–20 form the signal peptide; that stretch reads MDCHLSILILFGCCVLSCSR. Topologically, residues 21–541 are extracellular; sequence ELSPQPSNEV…SFSISGENSH (521 aa). The 179-residue stretch at 29-207 folds into the Eph LBD domain; it reads EVNLLDSKTI…YFKKCPFTVK (179 aa). N-linked (GlcNAc...) asparagine glycans are attached at residues asparagine 232, asparagine 337, asparagine 391, asparagine 404, and asparagine 493. Fibronectin type-III domains follow at residues 325–435 and 436–532; these read PPSA…TNQA and APSP…SPDS. Residues 542-565 traverse the membrane as a helical segment; sequence VVMIAISAAVAIIVLTVVTYVLVG. The Cytoplasmic portion of the chain corresponds to 566–984; sequence RFCGYHKSKH…TQSKNGPVPV (419 aa). Tyrosine 597 and tyrosine 603 each carry phosphotyrosine; by autocatalysis. Residues 622–883 enclose the Protein kinase domain; sequence IAIDKVVGAG…QIVSILDKLI (262 aa). ATP-binding positions include 629 to 634, lysine 654, and 701 to 707; these read GAGEFG and EYMENGS. Tyrosine 702 carries the post-translational modification Phosphotyrosine; by autocatalysis. Aspartate 747 acts as the Proton acceptor in catalysis. An ATP-binding site is contributed by 751-752; the sequence is RN. Phosphotyrosine; by autocatalysis is present on tyrosine 780. Positions 912–976 constitute an SAM domain; it reads ATFHTTGDWL…ISSIKALETQ (65 aa). Residue tyrosine 938 is modified to Phosphotyrosine. A PDZ-binding motif is present at residues 982 to 984; sequence VPV.

This sequence belongs to the protein kinase superfamily. Tyr protein kinase family. Ephrin receptor subfamily. As to quaternary structure, heterotetramer upon binding of the ligand. The heterotetramer is composed of an ephrin dimer and a receptor dimer. Oligomerization is probably required to induce biological responses. Forms a ternary EFNA5-EPHA3-ADAM10 complex mediating EFNA5 extracellular domain shedding by ADAM10 which regulates the EFNA5-EPHA3 complex internalization and function. Interacts (phosphorylated) with PTPN1; dephosphorylates EPHA3 and may regulate its trafficking and function. Interacts (phosphorylated) with CRK; mediates EFNA5-EPHA3 signaling through RHOA GTPase activation. Interacts with NCK1 (via SH2 domain); mediates EFNA5-EPHA3 signaling. Post-translationally, autophosphorylates upon activation by EFNA5. Phosphorylation on Tyr-603 mediates interaction with NCK1. Dephosphorylated by PTPN1. In terms of tissue distribution, most abundant in the heart, brain and lung.

Its subcellular location is the cell membrane. It carries out the reaction L-tyrosyl-[protein] + ATP = O-phospho-L-tyrosyl-[protein] + ADP + H(+). Functionally, receptor tyrosine kinase which binds promiscuously membrane-bound ephrin family ligands residing on adjacent cells, leading to contact-dependent bidirectional signaling into neighboring cells. The signaling pathway downstream of the receptor is referred to as forward signaling while the signaling pathway downstream of the ephrin ligand is referred to as reverse signaling. Highly promiscuous for ephrin-A ligands it binds preferentially EFNA5. Upon activation by EFNA5 regulates cell-cell adhesion, cytoskeletal organization and cell migration. Plays a role in cardiac cells migration and differentiation and regulates the formation of the atrioventricular canal and septum during development probably through activation by EFNA1. Involved in the retinotectal mapping of neurons. May also control the segregation but not the guidance of motor and sensory axons during neuromuscular circuit development. The chain is Ephrin type-A receptor 3 (Epha3) from Rattus norvegicus (Rat).